Consider the following 228-residue polypeptide: U1 small nuclear ribonucleoprotein C-2 (228 aa).

A Matrin-type zinc finger spans residues 4–36 (YYCDYCDTYLTHDSPSVRKQHNAGYKHKANVRT). Positions 105–228 (PGVRPPILPA…SYALPSEGNH (124 aa)) are disordered. Pro residues-rich tracts occupy residues 107–156 (VRPP…PPGS) and 164–175 (LPRPPTLPPPTS). A compositionally biased stretch (low complexity) spans 178–190 (PGAPIPNSAAPPA). Residues 196 to 214 (PPAPAGPTSGAPPAPPTAP) are compositionally biased toward pro residues.

The protein belongs to the U1 small nuclear ribonucleoprotein C family. U1 snRNP is composed of the 7 core Sm proteins B/B', D1, D2, D3, E, F and G that assemble in a heptameric protein ring on the Sm site of the small nuclear RNA to form the core snRNP, and at least 3 U1 snRNP-specific proteins U1-70K, U1-A and U1-C. U1-C interacts with U1 snRNA and the 5' splice-site region of the pre-mRNA.

It localises to the nucleus. In terms of biological role, component of the spliceosomal U1 snRNP, which is essential for recognition of the pre-mRNA 5' splice-site and the subsequent assembly of the spliceosome. U1-C is directly involved in initial 5' splice-site recognition for both constitutive and regulated alternative splicing. The interaction with the 5' splice-site seems to precede base-pairing between the pre-mRNA and the U1 snRNA. Stimulates commitment or early (E) complex formation by stabilizing the base pairing of the 5' end of the U1 snRNA and the 5' splice-site region. In Sorghum bicolor (Sorghum), this protein is U1 small nuclear ribonucleoprotein C-2.